Here is a 520-residue protein sequence, read N- to C-terminus: Cytochrome P450 1A1 (520 aa).

Residue F230 participates in substrate binding. C464 provides a ligand contact to heme.

Belongs to the cytochrome P450 family. Requires heme as cofactor.

The protein resides in the endoplasmic reticulum membrane. It localises to the microsome membrane. It carries out the reaction an organic molecule + reduced [NADPH--hemoprotein reductase] + O2 = an alcohol + oxidized [NADPH--hemoprotein reductase] + H2O + H(+). Cytochromes P450 are a group of heme-thiolate monooxygenases. In liver microsomes, this enzyme is involved in an NADPH-dependent electron transport pathway. It oxidizes a variety of structurally unrelated compounds, including steroids, fatty acids, and xenobiotics. The chain is Cytochrome P450 1A1 (cyp1a1) from Dicentrarchus labrax (European seabass).